The primary structure comprises 655 residues: Macrolide export ATP-binding/permease protein MacB (655 aa).

The region spanning 6–244 is the ABC transporter domain; it reads IVLRGLRREY…VAAPTAAAAQ (239 aa). 42-49 lines the ATP pocket; the sequence is GASGSGKS. The next 4 membrane-spanning stretches (helical) occupy residues 279 to 299, 528 to 548, 579 to 599, and 618 to 638; these read FLTMLGIIIGIASVVFIVAVG, LTLMIAAIAVISLVVGGIGVM, FLIEAVMVCLIGGGLGVAVAY, and AGSIIAAFICSTGIGVVFGYL.

Belongs to the ABC transporter superfamily. Macrolide exporter (TC 3.A.1.122) family. In terms of assembly, homodimer.

Its subcellular location is the cell inner membrane. Non-canonical ABC transporter that contains transmembrane domains (TMD), which form a pore in the inner membrane, and an ATP-binding domain (NBD), which is responsible for energy generation. Confers resistance against macrolides. The protein is Macrolide export ATP-binding/permease protein MacB of Rhodopseudomonas palustris (strain BisB18).